The chain runs to 375 residues: Neuropeptide Y receptor type 4 (375 aa).

At M1–D39 the chain is on the extracellular side. N2, N19, and N29 each carry an N-linked (GlcNAc...) asparagine glycan. Residues L40–L60 traverse the membrane as a helical segment. Residues C61–L78 are Cytoplasmic-facing. A helical membrane pass occupies residues L79–V99. Residues T100–M116 are Extracellular-facing. Residues C114 and C201 are joined by a disulfide bond. Residues L117–L137 traverse the membrane as a helical segment. At E138–Q155 the chain is on the cytoplasmic side. Residues A156 to A176 form a helical membrane-spanning segment. The Extracellular portion of the chain corresponds to N177–R211. An N-linked (GlcNAc...) asparagine glycan is attached at N187. A helical transmembrane segment spans residues L212–V232. Residues C233–R262 lie on the Cytoplasmic side of the membrane. A helical membrane pass occupies residues I263 to V283. Topologically, residues F284–N301 are extracellular. A helical membrane pass occupies residues L302–Y322. At G323–M375 the chain is on the cytoplasmic side. C340 carries S-palmitoyl cysteine lipidation.

It belongs to the G-protein coupled receptor 1 family. As to expression, detected in colon and brain.

It is found in the cell membrane. Functionally, g protein-coupled receptor for PPY/pancreatic polypeptide/PP that is negatively coupled to cAMP. Has much lower affinity for the NPY/neuropeptide Y and PYY/peptide YY. This chain is Neuropeptide Y receptor type 4 (Npy4r), found in Rattus norvegicus (Rat).